Here is a 235-residue protein sequence, read N- to C-terminus: Protein YIP4 (235 aa).

The next 5 helical transmembrane spans lie at 89 to 109 (ISANCDLWAPLAFIILYSLFV), 114 to 134 (SLFSSLFVSSWFILLVMALHL), 145 to 165 (LISYISISGYCLFPQVLNALV), 186 to 206 (VLSLVKLVVMALCLMWSVAAV), and 215 to 235 (IIEIYPLALCLFGMAWLSTIL).

This sequence belongs to the YIP1 family. Interacts with TVP18, TVP23, YIP1 and YIP5. Interacts with SEC4, YPT1, YPT6, YPT7, YPT10, YPT11, YPT31, YPT32 and YPT52; These proteins are all Rab GTPases.

It localises to the golgi apparatus membrane. May be involved in proper membrane localization of Rab GTPases. This is Protein YIP4 (YIP4) from Saccharomyces cerevisiae (strain ATCC 204508 / S288c) (Baker's yeast).